The sequence spans 156 residues: ATP synthase subunit b (156 aa).

A helical membrane pass occupies residues 1 to 21 (MNVTVTLIGQMVAFGILVWFV).

This sequence belongs to the ATPase B chain family. In terms of assembly, F-type ATPases have 2 components, F(1) - the catalytic core - and F(0) - the membrane proton channel. F(1) has five subunits: alpha(3), beta(3), gamma(1), delta(1), epsilon(1). F(0) has three main subunits: a(1), b(2) and c(10-14). The alpha and beta chains form an alternating ring which encloses part of the gamma chain. F(1) is attached to F(0) by a central stalk formed by the gamma and epsilon chains, while a peripheral stalk is formed by the delta and b chains.

The protein resides in the cell inner membrane. In terms of biological role, f(1)F(0) ATP synthase produces ATP from ADP in the presence of a proton or sodium gradient. F-type ATPases consist of two structural domains, F(1) containing the extramembraneous catalytic core and F(0) containing the membrane proton channel, linked together by a central stalk and a peripheral stalk. During catalysis, ATP synthesis in the catalytic domain of F(1) is coupled via a rotary mechanism of the central stalk subunits to proton translocation. Its function is as follows. Component of the F(0) channel, it forms part of the peripheral stalk, linking F(1) to F(0). The chain is ATP synthase subunit b from Nitrosococcus oceani (strain ATCC 19707 / BCRC 17464 / JCM 30415 / NCIMB 11848 / C-107).